A 575-amino-acid polypeptide reads, in one-letter code: 4-substituted benzoates-glutamate ligase GH3.12 (575 aa).

Positions 6–33 (DINETFEKQLKDLTSNVKSIQDNLLEEI) form a coiled coil. 95–96 (SS) serves as a coordination point for AMP. Residue 120-123 (YDLR) coordinates salicylate. AMP contacts are provided by Thr301, Thr324, Ser328, Tyr347, Asp398, and Arg417.

This sequence belongs to the IAA-amido conjugating enzyme family. As to quaternary structure, interacts with the P.syringae pv. maculicola effector HopW1-1 (via C-terminus). In terms of tissue distribution, expressed in seedlings, mostly in cotyledons, leaves, hypocotyls and sporadically in roots. Not detected in unchallenged adult plants, except in flowers.

Specifically and reversibly inhibited by salicylic acid (SA). In terms of biological role, catalyzes the conjugation of specific amino acids (e.g. Glu and possibly His, Lys, and Met) to their preferred acyl substrates (e.g. 4-substituted benzoates), in a magnesium ion- and ATP-dependent manner. Can use 4-substituted benzoates such as 4-aminobenzoate (pABA), 4-fluorobenzoate and 4-hydroxybenzoate (4-HBA), and, to a lesser extent, benzoate, vanillate and trans-cinnamate, but not 2-substituted benzoates and salicylic acid (SA), as conjugating acyl substrates. Involved in both basal and induced resistance in a SA-dependent manner. Confers resistance to virulent and avirulent pathogens (at least bacteria and oomycetes), and promotes SA glucosides accumulation. Required for the establishment of hyper-sensitive response (HR) upon incompatible interaction and subsequent systemic acquired resistance (SAR). The protein is 4-substituted benzoates-glutamate ligase GH3.12 (GH3.12) of Arabidopsis thaliana (Mouse-ear cress).